Consider the following 192-residue polypeptide: A-type ATP synthase subunit E (192 aa).

The protein belongs to the V-ATPase E subunit family. In terms of assembly, has multiple subunits with at least A(3), B(3), C, D, E, F, H, I and proteolipid K(x).

It is found in the cell membrane. In terms of biological role, component of the A-type ATP synthase that produces ATP from ADP in the presence of a proton gradient across the membrane. The protein is A-type ATP synthase subunit E of Metallosphaera sedula (strain ATCC 51363 / DSM 5348 / JCM 9185 / NBRC 15509 / TH2).